Consider the following 479-residue polypeptide: Anaerobic nitric oxide reductase flavorubredoxin (479 aa).

The tract at residues Leu30 to Ile210 is zinc metallo-hydrolase. His79, Glu81, Asp83, His147, Asp166, and His227 together coordinate Fe cation. A Flavodoxin-like domain is found at Ile254 to Ala393. FMN-binding positions include Thr260–Asn264 and Ala342–Leu369. Residues Gly423 to Leu474 enclose the Rubredoxin-like domain. Cys428, Cys431, Cys461, and Cys464 together coordinate Fe cation.

This sequence in the N-terminal section; belongs to the zinc metallo-hydrolase group 3 family. Homotetramer. Requires Fe cation as cofactor. The cofactor is FMN.

The protein resides in the cytoplasm. It participates in nitrogen metabolism; nitric oxide reduction. Anaerobic nitric oxide reductase; uses NADH to detoxify nitric oxide (NO), protecting several 4Fe-4S NO-sensitive enzymes. Has at least 2 reductase partners, only one of which (NorW, flavorubredoxin reductase) has been identified. NO probably binds to the di-iron center; electrons enter from the NorW at rubredoxin and are transferred sequentially to the FMN center and the di-iron center. Also able to function as an aerobic oxygen reductase. This is Anaerobic nitric oxide reductase flavorubredoxin from Salmonella choleraesuis (strain SC-B67).